The sequence spans 319 residues: Beta-ketoacyl-[acyl-carrier-protein] synthase III (319 aa).

Active-site residues include cysteine 113 and histidine 246. The ACP-binding stretch occupies residues 247–251 (QANIR). The active site involves asparagine 276.

The protein belongs to the thiolase-like superfamily. FabH family. As to quaternary structure, homodimer.

It localises to the cytoplasm. The catalysed reaction is malonyl-[ACP] + acetyl-CoA + H(+) = 3-oxobutanoyl-[ACP] + CO2 + CoA. Its pathway is lipid metabolism; fatty acid biosynthesis. Catalyzes the condensation reaction of fatty acid synthesis by the addition to an acyl acceptor of two carbons from malonyl-ACP. Catalyzes the first condensation reaction which initiates fatty acid synthesis and may therefore play a role in governing the total rate of fatty acid production. Possesses both acetoacetyl-ACP synthase and acetyl transacylase activities. Its substrate specificity determines the biosynthesis of branched-chain and/or straight-chain of fatty acids. The sequence is that of Beta-ketoacyl-[acyl-carrier-protein] synthase III from Ehrlichia ruminantium (strain Gardel).